A 507-amino-acid polypeptide reads, in one-letter code: Maturase K (507 aa).

It belongs to the intron maturase 2 family. MatK subfamily.

Its subcellular location is the plastid. The protein localises to the chloroplast. Functionally, usually encoded in the trnK tRNA gene intron. Probably assists in splicing its own and other chloroplast group II introns. This chain is Maturase K, found in Araucaria heterophylla (Norfolk Island pine).